We begin with the raw amino-acid sequence, 372 residues long: Probable dual-specificity RNA methyltransferase RlmN (372 aa).

Residues 1–20 (MTSLPLTPVNPDAPARRAAM) are disordered. Residue Glu-112 is the Proton acceptor of the active site. The 240-residue stretch at 118–357 (YPDRVTVCLS…STTVRDTRGR (240 aa)) folds into the Radical SAM core domain. Cys-125 and Cys-363 are oxidised to a cystine. Residues Cys-132, Cys-136, and Cys-139 each contribute to the [4Fe-4S] cluster site. S-adenosyl-L-methionine is bound by residues 187-188 (GE), Ser-221, 244-246 (SLH), and Asn-320. Cys-363 functions as the S-methylcysteine intermediate in the catalytic mechanism.

It belongs to the radical SAM superfamily. RlmN family. The cofactor is [4Fe-4S] cluster.

It is found in the cytoplasm. It carries out the reaction adenosine(2503) in 23S rRNA + 2 reduced [2Fe-2S]-[ferredoxin] + 2 S-adenosyl-L-methionine = 2-methyladenosine(2503) in 23S rRNA + 5'-deoxyadenosine + L-methionine + 2 oxidized [2Fe-2S]-[ferredoxin] + S-adenosyl-L-homocysteine. The catalysed reaction is adenosine(37) in tRNA + 2 reduced [2Fe-2S]-[ferredoxin] + 2 S-adenosyl-L-methionine = 2-methyladenosine(37) in tRNA + 5'-deoxyadenosine + L-methionine + 2 oxidized [2Fe-2S]-[ferredoxin] + S-adenosyl-L-homocysteine. In terms of biological role, specifically methylates position 2 of adenine 2503 in 23S rRNA and position 2 of adenine 37 in tRNAs. The chain is Probable dual-specificity RNA methyltransferase RlmN from Salinispora tropica (strain ATCC BAA-916 / DSM 44818 / JCM 13857 / NBRC 105044 / CNB-440).